Consider the following 540-residue polypeptide: Type II methyltransferase M.AccI (540 aa).

This sequence belongs to the N(4)/N(6)-methyltransferase family. Monomer.

The enzyme catalyses a 2'-deoxyadenosine in DNA + S-adenosyl-L-methionine = an N(6)-methyl-2'-deoxyadenosine in DNA + S-adenosyl-L-homocysteine + H(+). Functionally, a gamma subtype methylase, recognizes the double-stranded sequence 5'-GTMKAC-3', methylates A-5 on both strands, and protects the DNA from cleavage by the AccI endonuclease. In Acinetobacter calcoaceticus, this protein is Type II methyltransferase M.AccI (accIM).